We begin with the raw amino-acid sequence, 124 residues long: Late embryogenesis abundant protein 37 (124 aa).

The N-terminal 35 residues, 1–35, are a transit peptide targeting the mitochondrion; the sequence is MSQSLFNLKSLSRSINNTIRMRRYIVITKASQRAY.

This sequence belongs to the LEA type 3 family.

The protein resides in the mitochondrion. This is Late embryogenesis abundant protein 37 from Arabidopsis thaliana (Mouse-ear cress).